The chain runs to 686 residues: Leucine-rich repeat-containing protein 49 (686 aa).

7 LRR repeats span residues 113-134 (HLRL…SNLQ), 135-156 (KLIS…STLR), 157-178 (CLRV…ENLK), 179-200 (SLDV…NHLC), 201-222 (ELRV…NGLD), 223-244 (SLTE…DNLP), and 245-266 (CLQH…SCLA). An LRRCT domain is found at 279–317 (NPIAQESWYKHTVLQNMMQLRQLDMKRITEEERRMASVL). Positions 303–341 (MKRITEEERRMASVLAKKEEEKKRESHKQSLLKEKKRLT) form a coiled coil. The interval 360 to 388 (ATNEDRKDSDSPQDPCQIDGSTLSAFPEE) is disordered.

As to quaternary structure, part of the neuronal tubulin polyglutamylase complex which contains TPGS1, TPGS2, TTLL1, LRRC49 and NICN1. Interacts with PCM1; TTLL1, TPGS1, TPGS2 and LRRC49.

It is found in the cytoplasm. The protein localises to the cytoskeleton. It localises to the microtubule organizing center. The protein resides in the centrosome. Its subcellular location is the centriolar satellite. In terms of biological role, subunit of the tubulin polyglutamylase complex (TPGC). The complex mediates cilia and flagella polyglutamylation which is essential for their biogenesis and motility. This chain is Leucine-rich repeat-containing protein 49, found in Homo sapiens (Human).